The following is a 251-amino-acid chain: Imidazole glycerol phosphate synthase subunit HisF (251 aa).

Catalysis depends on residues aspartate 11 and aspartate 130.

The protein belongs to the HisA/HisF family. As to quaternary structure, heterodimer of HisH and HisF.

The protein resides in the cytoplasm. The catalysed reaction is 5-[(5-phospho-1-deoxy-D-ribulos-1-ylimino)methylamino]-1-(5-phospho-beta-D-ribosyl)imidazole-4-carboxamide + L-glutamine = D-erythro-1-(imidazol-4-yl)glycerol 3-phosphate + 5-amino-1-(5-phospho-beta-D-ribosyl)imidazole-4-carboxamide + L-glutamate + H(+). It participates in amino-acid biosynthesis; L-histidine biosynthesis; L-histidine from 5-phospho-alpha-D-ribose 1-diphosphate: step 5/9. IGPS catalyzes the conversion of PRFAR and glutamine to IGP, AICAR and glutamate. The HisF subunit catalyzes the cyclization activity that produces IGP and AICAR from PRFAR using the ammonia provided by the HisH subunit. The chain is Imidazole glycerol phosphate synthase subunit HisF from Listeria welshimeri serovar 6b (strain ATCC 35897 / DSM 20650 / CCUG 15529 / CIP 8149 / NCTC 11857 / SLCC 5334 / V8).